The following is a 439-amino-acid chain: Argininosuccinate lyase (439 aa).

The protein belongs to the lyase 1 family. Argininosuccinate lyase subfamily.

Its subcellular location is the cytoplasm. The catalysed reaction is 2-(N(omega)-L-arginino)succinate = fumarate + L-arginine. It functions in the pathway amino-acid biosynthesis; L-arginine biosynthesis; L-arginine from L-ornithine and carbamoyl phosphate: step 3/3. This Caldanaerobacter subterraneus subsp. tengcongensis (strain DSM 15242 / JCM 11007 / NBRC 100824 / MB4) (Thermoanaerobacter tengcongensis) protein is Argininosuccinate lyase.